Consider the following 215-residue polypeptide: Peptide methionine sulfoxide reductase MsrA (215 aa).

Cys58 is an active-site residue.

The protein belongs to the MsrA Met sulfoxide reductase family.

It catalyses the reaction L-methionyl-[protein] + [thioredoxin]-disulfide + H2O = L-methionyl-(S)-S-oxide-[protein] + [thioredoxin]-dithiol. The catalysed reaction is [thioredoxin]-disulfide + L-methionine + H2O = L-methionine (S)-S-oxide + [thioredoxin]-dithiol. Its function is as follows. Has an important function as a repair enzyme for proteins that have been inactivated by oxidation. Catalyzes the reversible oxidation-reduction of methionine sulfoxide in proteins to methionine. This is Peptide methionine sulfoxide reductase MsrA from Pseudomonas aeruginosa (strain UCBPP-PA14).